A 359-amino-acid polypeptide reads, in one-letter code: Tropomodulin-1 (359 aa).

Residues 36-61 are disordered; the sequence is ELDPDNALLPAGLRQKDQTTKAPTGP. The tract at residues 39–138 is tropomyosin-binding; sequence PDNALLPAGL…CDIAAILGMH (100 aa).

This sequence belongs to the tropomodulin family. Binds to the N-terminus of tropomyosin and to actin. Interacts with FLII.

It localises to the cytoplasm. It is found in the cytoskeleton. Functionally, blocks the elongation and depolymerization of the actin filaments at the pointed end. The Tmod/TM complex contributes to the formation of the short actin protofilament, which in turn defines the geometry of the membrane skeleton. This Rattus norvegicus (Rat) protein is Tropomodulin-1 (Tmod1).